Here is an 81-residue protein sequence, read N- to C-terminus: Anaphase-promoting complex subunit emb-1 (81 aa).

As to quaternary structure, the APC/C is probably composed of at least 12 subunits: apc-2, apc-10, apc-11, cdc-26, emb-1, emb-27, emb-30, mat-1, mat-2, mat-3, such-1 and gfi-3. Expressed in germ cells.

The protein operates within protein modification; protein ubiquitination. Its function is as follows. Probable component of the anaphase promoting complex/cyclosome (APC/C), a cell cycle-regulated E3 ubiquitin ligase that controls progression through mitosis and the G1 phase of the cell cycle. The APC/C complex acts by mediating ubiquitination and subsequent degradation of target proteins. Developmental role in early embryogenesis and the metaphase to anaphase transition in meiosis and mitosis. May be required for germline proliferation. Required for male tail development and hermaphrodite vulva formation. The protein is Anaphase-promoting complex subunit emb-1 of Caenorhabditis elegans.